A 418-amino-acid chain; its full sequence is MTVTIENIHAREIFDSRGNPTVEVDVRLTDGTLGRAAVPSGASTGDREAVELRDGGARLQGKDVSKAVANVNGEIYEALKGQSPFNQAKLDHLMIELDGTKNKSRLGANAILGVSMAIARAAANSEKIPLYRYLGGVDLELPQPFFNVINGGVHADSGIDVQEFLITPVKRASFRDGLEKIANIYHTLKKILADKGLETAVGDEGGFAPKLGSTENAIATLYQAIERAGYVPGEEIAIAIDPASSEFYDDKEKVYHFEGQKLTSAELLTYYEGLVEKYPALISIEDGFSEHDWAGFAAQTKVQGQKIQLVGDDIFVTNPEIFKEGIQKGVANAILIKLNQIGTVTEAIEAISLARKAGYKTMISHRSGETVDSFIADFAVAMHAGQIKTGSMARSERVEKYNQFLRIEEELLGLEVTK.

Residue Gln-162 coordinates (2R)-2-phosphoglycerate. Residue Glu-204 is the Proton donor of the active site. The Mg(2+) site is built by Asp-241, Glu-285, and Asp-312. (2R)-2-phosphoglycerate contacts are provided by Lys-337, Arg-366, Ser-367, and Lys-388. The active-site Proton acceptor is Lys-337.

It belongs to the enolase family. It depends on Mg(2+) as a cofactor.

Its subcellular location is the cytoplasm. It localises to the secreted. It is found in the cell surface. It catalyses the reaction (2R)-2-phosphoglycerate = phosphoenolpyruvate + H2O. It participates in carbohydrate degradation; glycolysis; pyruvate from D-glyceraldehyde 3-phosphate: step 4/5. In terms of biological role, catalyzes the reversible conversion of 2-phosphoglycerate (2-PG) into phosphoenolpyruvate (PEP). It is essential for the degradation of carbohydrates via glycolysis. This chain is Enolase 1, found in Lactococcus lactis subsp. cremoris (strain SK11).